We begin with the raw amino-acid sequence, 239 residues long: Cysteine-rich venom protein ophanin (239 aa).

An N-terminal signal peptide occupies residues 1–18 (MIAFTLLSLAAVLQQSFG). The SCP domain maps to 37–165 (VDLHNSLRRS…EYSYFYVCQY (129 aa)). Intrachain disulfides connect Cys74/Cys152, Cys91/Cys166, Cys147/Cys163, Cys185/Cys192, Cys188/Cys197, Cys201/Cys234, Cys210/Cys228, and Cys219/Cys232. The ShKT domain occupies 201 to 234 (CTLYNEYTNCDSLVKQSSCQDEWIKSKCPASCFC).

As to expression, expressed by the venom gland.

It is found in the secreted. Functionally, weakly blocks contraction of smooth muscle elicited by high potassium-induced depolarization, but does not block caffeine-stimulated contraction. May target voltage-gated calcium channels on smooth muscle. The chain is Cysteine-rich venom protein ophanin from Ophiophagus hannah (King cobra).